A 567-amino-acid chain; its full sequence is Glutamine--tRNA ligase (567 aa).

Positions 47 to 57 (PEPNGYLHIGH) match the 'HIGH' region motif. Residues 48 to 50 (EPN) and 54 to 60 (HIGHAKS) each bind ATP. L-glutamine is bound by residues D80 and Y225. ATP contacts are provided by residues T244 and 274–275 (RL). The 'KMSKS' region motif lies at 281–285 (ITSKR).

The protein belongs to the class-I aminoacyl-tRNA synthetase family. As to quaternary structure, monomer.

The protein localises to the cytoplasm. It catalyses the reaction tRNA(Gln) + L-glutamine + ATP = L-glutaminyl-tRNA(Gln) + AMP + diphosphate. The sequence is that of Glutamine--tRNA ligase from Pseudomonas putida (strain ATCC 47054 / DSM 6125 / CFBP 8728 / NCIMB 11950 / KT2440).